We begin with the raw amino-acid sequence, 253 residues long: Triosephosphate isomerase (253 aa).

9–11 (NWK) is a binding site for substrate. The active-site Electrophile is His97. The active-site Proton acceptor is the Glu169. Substrate contacts are provided by residues Gly175, Ser215, and 236–237 (GG).

It belongs to the triosephosphate isomerase family. Homodimer.

The protein resides in the cytoplasm. It catalyses the reaction D-glyceraldehyde 3-phosphate = dihydroxyacetone phosphate. The protein operates within carbohydrate biosynthesis; gluconeogenesis. It participates in carbohydrate degradation; glycolysis; D-glyceraldehyde 3-phosphate from glycerone phosphate: step 1/1. In terms of biological role, involved in the gluconeogenesis. Catalyzes stereospecifically the conversion of dihydroxyacetone phosphate (DHAP) to D-glyceraldehyde-3-phosphate (G3P). In Staphylococcus saprophyticus subsp. saprophyticus (strain ATCC 15305 / DSM 20229 / NCIMB 8711 / NCTC 7292 / S-41), this protein is Triosephosphate isomerase.